Here is a 1577-residue protein sequence, read N- to C-terminus: High molecular weight form of myosin-1 (1577 aa).

One can recognise a Myosin motor domain in the interval 75–751; it reads KSVDDLVQMD…EQRGLELQRN (677 aa). At K119 the chain carries N6,N6,N6-trimethyllysine. Residue 168–175 coordinates ATP; it reads GESGAGKT. 2 actin-binding regions span residues 628-650 and 730-744; these read LDSLMTALNATEPHYIRCIKPNS and QVGKTRVLYRAPEQR. The 28-residue stretch at 755–782 folds into the IQ domain; the sequence is ERVTIQIQAGVRRMFARRLYKRMRAIKP. Positions 1261 to 1401 constitute a MyTH4 domain; the sequence is WTKSPIPTSL…PNVEQILAAK (141 aa). Disordered regions lie at residues 1442 to 1466 and 1483 to 1516; these read SRPAQARAQPGQQAQPAGAARQQAA and QQQQQQQGYDQQQQAYGGGADYGQQQQQQDLPAE. Low complexity-rich tracts occupy residues 1444 to 1466 and 1483 to 1497; these read PAQARAQPGQQAQPAGAARQQAA and QQQQQQQGYDQQQQA. Residues 1519–1577 form the SH3 domain; that stretch reads EEYKQVEVVYDYDGGGDAQRLVLVKGAIITVIKEYEGWAYGSTDDGQVGLYPINYTRPI.

It belongs to the TRAFAC class myosin-kinesin ATPase superfamily. Myosin family. In terms of assembly, myosin I heavy chain is single-headed.

In Acanthamoeba castellanii (Amoeba), this protein is High molecular weight form of myosin-1.